Consider the following 250-residue polypeptide: F-box only protein 17 (250 aa).

In terms of domain architecture, F-box spans 15–62; that stretch reads HMALAELPPELLLQVLSHVPPRALVTRCRPVCRAWRDLVDGPSVWLLQ. The FBA domain occupies 99–250; the sequence is FCLLAPLGRN…GLLQGLSRLH (152 aa).

In terms of assembly, part of a SCF (SKP1-cullin-F-box) protein ligase complex. Interacts with SKP1 and CUL1.

Substrate-recognition component of the SCF (SKP1-CUL1-F-box protein)-type E3 ubiquitin ligase complex. Able to recognize and bind denatured glycoproteins, which are modified with complex-type oligosaccharides. Also recognizes sulfated glycans. Does not bind high-mannose glycoproteins. The chain is F-box only protein 17 (Fbxo17) from Rattus norvegicus (Rat).